A 438-amino-acid polypeptide reads, in one-letter code: Carboxypeptidase A6 (438 aa).

Positions 1-30 are cleaved as a signal peptide; sequence MNFLGNPRSHTAAFLPVCWLLLNILKPGHC. Positions 31 to 129 are cleaved as a propeptide — activation peptide; sequence HSYDNRYAGD…NSLQTQRNRR (99 aa). N-linked (GlcNAc...) asparagine glycans are attached at residues Asn-89 and Asn-153. Residues 138-433 enclose the Peptidase M14 domain; it reads VYHSLEDIQS…LAVKNITMHL (296 aa). Positions 197 and 200 each coordinate Zn(2+). Residues 197–200, Arg-255, and 272–273 contribute to the substrate site; these read HARE and NR. Residues Cys-266 and Cys-289 are joined by a disulfide bond. Position 325 (His-325) interacts with Zn(2+). 326 to 327 contributes to the substrate binding site; that stretch reads AY. N-linked (GlcNAc...) asparagine glycosylation occurs at Asn-344. Tyr-377 serves as a coordination point for substrate. The active-site Proton donor/acceptor is Glu-399. The N-linked (GlcNAc...) asparagine glycan is linked to Asn-428.

The protein belongs to the peptidase M14 family. Requires Zn(2+) as cofactor. In brain, highly expressed in the olfactory bulb with lower levels in other regions including cerebral cortex, hippocampus, hypothalamus, striatum and medulla. Within the olfactory bulb, highest levels occur in the mitral and granular layers with lower levels in the internal and external plexiform layers. Moderate levels are found in the epididymis with low levels in colon and spleen. Not detected in adrenal, liver, lung, ovary or testis. At embryonic day 14.5, enriched in eye, ear, osteoblasts, stomach, skin, dorsal root ganglia and throughout the CNS.

It localises to the secreted. The protein localises to the extracellular space. It is found in the extracellular matrix. In terms of biological role, may be involved in the proteolytic inactivation of enkephalins and neurotensin in some brain areas. May convert inactive angiotensin I into the biologically active angiotensin II. Releases a C-terminal amino acid, with preference for large hydrophobic C-terminal amino acids and shows only very weak activity toward small amino acids and histidine. This Mus musculus (Mouse) protein is Carboxypeptidase A6 (Cpa6).